We begin with the raw amino-acid sequence, 66 residues long: Cocaine- and amphetamine-regulated transcript protein (66 aa).

Intrachain disulfides connect cysteine 34–cysteine 52 and cysteine 40–cysteine 60.

It belongs to the CART family.

Its subcellular location is the secreted. Functionally, satiety factor closely associated with the actions of leptin and neuropeptide y; this anorectic peptide inhibits both normal and starvation-induced feeding and completely blocks the feeding response induced by neuropeptide Y and regulated by leptin in the hypothalamus. In Sus scrofa (Pig), this protein is Cocaine- and amphetamine-regulated transcript protein (CARTPT).